The following is a 61-amino-acid chain: Small ribosomal subunit protein uS14 (61 aa).

Residues Cys-24, Cys-27, Cys-40, and Cys-43 each contribute to the Zn(2+) site.

Belongs to the universal ribosomal protein uS14 family. Zinc-binding uS14 subfamily. In terms of assembly, part of the 30S ribosomal subunit. Contacts proteins S3 and S10. The cofactor is Zn(2+).

Binds 16S rRNA, required for the assembly of 30S particles and may also be responsible for determining the conformation of the 16S rRNA at the A site. The sequence is that of Small ribosomal subunit protein uS14 from Campylobacter fetus subsp. fetus (strain 82-40).